A 351-amino-acid polypeptide reads, in one-letter code: Photosystem II D2 protein (351 aa).

The chain crosses the membrane as a helical span at residues 39–59 (TAYLAIGGWLTGTTFVTSWYT). A chlorophyll a-binding site is contributed by H116. The chain crosses the membrane as a helical span at residues 123–139 (GFMLRQFEIARLVGIRP). Residues Q128 and N141 each contribute to the pheophytin a site. A helical transmembrane segment spans residues 151–164 (VFVSVFLMYPLGQS). H196 lines the chlorophyll a pocket. The chain crosses the membrane as a helical span at residues 206 to 226 (GALLCAIHGATVENTLFEDGE). A plastoquinone is bound by residues H213 and F260. A Fe cation-binding site is contributed by H213. Residue H267 participates in Fe cation binding. The chain crosses the membrane as a helical span at residues 277–293 (GLWTSSIGIIGLALNLR).

It belongs to the reaction center PufL/M/PsbA/D family. PSII is composed of 1 copy each of membrane proteins PsbA, PsbB, PsbC, PsbD, PsbE, PsbF, PsbH, PsbI, PsbJ, PsbK, PsbL, PsbM, PsbT, PsbX, PsbY, PsbZ, Psb30/Ycf12, peripheral proteins PsbO, CyanoQ (PsbQ), PsbU, PsbV and a large number of cofactors. It forms dimeric complexes. Requires The D1/D2 heterodimer binds P680, chlorophylls that are the primary electron donor of PSII, and subsequent electron acceptors. It shares a non-heme iron and each subunit binds pheophytin, quinone, additional chlorophylls, carotenoids and lipids. There is also a Cl(-1) ion associated with D1 and D2, which is required for oxygen evolution. The PSII complex binds additional chlorophylls, carotenoids and specific lipids. as cofactor.

The protein localises to the cellular thylakoid membrane. The catalysed reaction is 2 a plastoquinone + 4 hnu + 2 H2O = 2 a plastoquinol + O2. In terms of biological role, photosystem II (PSII) is a light-driven water:plastoquinone oxidoreductase that uses light energy to abstract electrons from H(2)O, generating O(2) and a proton gradient subsequently used for ATP formation. It consists of a core antenna complex that captures photons, and an electron transfer chain that converts photonic excitation into a charge separation. The D1/D2 (PsbA/PsbD) reaction center heterodimer binds P680, the primary electron donor of PSII as well as several subsequent electron acceptors. D2 is needed for assembly of a stable PSII complex. The chain is Photosystem II D2 protein from Synechococcus sp. (strain CC9605).